The primary structure comprises 347 residues: DNA primase small subunit PriS (347 aa).

Residues aspartate 95 and aspartate 97 contribute to the active site. Zn(2+)-binding residues include cysteine 106, histidine 108, cysteine 114, and cysteine 117. The Zinc knuckle motif motif lies at 106–117; it reads CNHEPGTVCPIC. Residue aspartate 280 is part of the active site.

This sequence belongs to the eukaryotic-type primase small subunit family. Heterodimer of a small subunit (PriS) and a large subunit (PriL). Both participate in formation of the active center, but the ATP-binding site is exclusively located on the small subunit. It depends on Mg(2+) as a cofactor. Mn(2+) is required as a cofactor.

Its function is as follows. Catalytic subunit of DNA primase, an RNA polymerase that catalyzes the synthesis of short RNA molecules used as primers for DNA polymerase during DNA replication. The small subunit contains the primase catalytic core and has DNA synthesis activity on its own. Binding to the large subunit stabilizes and modulates the activity, increasing the rate of DNA synthesis while decreasing the length of the DNA fragments, and conferring RNA synthesis capability. The DNA polymerase activity may enable DNA primase to also catalyze primer extension after primer synthesis. May also play a role in DNA repair. The chain is DNA primase small subunit PriS from Pyrococcus furiosus (strain ATCC 43587 / DSM 3638 / JCM 8422 / Vc1).